The following is a 450-amino-acid chain: NADP-specific glutamate dehydrogenase (450 aa).

Residue lysine 111 is part of the active site.

This sequence belongs to the Glu/Leu/Phe/Val dehydrogenases family. In terms of assembly, homohexamer.

It catalyses the reaction L-glutamate + NADP(+) + H2O = 2-oxoglutarate + NH4(+) + NADPH + H(+). In Hebeloma cylindrosporum, this protein is NADP-specific glutamate dehydrogenase.